The primary structure comprises 309 residues: Elongator complex protein 5 (309 aa).

Phosphoserine occurs at positions 3 and 4.

It belongs to the ELP5 family. Component of the elongator complex, which consists of ELP1/IKI3, ELP2, ELP3, ELP4, ELP5/IKI1 and ELP6. The elongator complex is composed of two copies of the Elp123 subcomplex (composed of ELP1/IKI3, ELP2 and ELP3) and two copies of the Elp456 subcomplex (composed of ELP4, ELP5/IKI1 and ELP6). The Elp123 subcomplex forms a two-lobed scaffold, which binds the Elp456 subcomplex asymmetrically. In each lobe, ELP2 is tightly sandwiched between ELP1/IKI3 and ELP3. The Elp123 subcomplex binds tRNA through ELP1/IKI3 and ELP3 and can bind 2 tRNAs simultaneously. tRNA-binding by the Elp123 subcomplex induces conformational rearrangements which precisely position the targeted anticodon base in the active site. The Elp456 subcomplex binds tRNA and has ATPase activity. Interacts with KTI11/DPH3.

It localises to the cytoplasm. The protein resides in the nucleus. It functions in the pathway tRNA modification; 5-methoxycarbonylmethyl-2-thiouridine-tRNA biosynthesis. In terms of biological role, component of the elongator complex which is required for multiple tRNA modifications, including mcm5U (5-methoxycarbonylmethyl uridine), mcm5s2U (5-methoxycarbonylmethyl-2-thiouridine), and ncm5U (5-carbamoylmethyl uridine). The elongator complex catalyzes formation of carboxymethyluridine in the wobble base at position 34 in tRNAs. It functions as a gamma-toxin target (TOT); disruption of the complex confers resistance to Kluyveromyces lactis toxin zymocin (pGKL1 killer toxin). May also be involved in sensitivity to Pichia inositovora toxin. The polypeptide is Elongator complex protein 5 (IKI1) (Saccharomyces cerevisiae (strain ATCC 204508 / S288c) (Baker's yeast)).